A 318-amino-acid polypeptide reads, in one-letter code: uncharacterized protein (318 aa).

Transmembrane regions (helical) follow at residues 230 to 250 (VWTY…SFLI) and 264 to 284 (ASLM…LGVI).

This sequence belongs to the glycosyltransferase 2 family. GtrB subfamily.

The protein localises to the cell membrane. This is an uncharacterized protein from Synechocystis sp. (strain ATCC 27184 / PCC 6803 / Kazusa).